The chain runs to 385 residues: Methylthioribose-1-phosphate isomerase (385 aa).

Asp-256 acts as the Proton donor in catalysis.

This sequence belongs to the eIF-2B alpha/beta/delta subunits family. MtnA subfamily.

It localises to the cytoplasm. The protein resides in the nucleus. It carries out the reaction 5-(methylsulfanyl)-alpha-D-ribose 1-phosphate = 5-(methylsulfanyl)-D-ribulose 1-phosphate. It functions in the pathway amino-acid biosynthesis; L-methionine biosynthesis via salvage pathway; L-methionine from S-methyl-5-thio-alpha-D-ribose 1-phosphate: step 1/6. Functionally, catalyzes the interconversion of methylthioribose-1-phosphate (MTR-1-P) into methylthioribulose-1-phosphate (MTRu-1-P). The protein is Methylthioribose-1-phosphate isomerase of Arthroderma otae (strain ATCC MYA-4605 / CBS 113480) (Microsporum canis).